A 593-amino-acid polypeptide reads, in one-letter code: Vitamin H transporter (593 aa).

Topologically, residues 1-121 are extracellular; the sequence is MTISNKSWRS…TTQTKAERRL (121 aa). 3 positions are modified to phosphoserine: serine 32, serine 33, and serine 43. A helical membrane pass occupies residues 122-142; that stretch reads LYKLDIIIALYFFMLCWSKSV. At 143 to 166 the chain is on the cytoplasmic side; the sequence is DLNNYTNAYVSNMKEDLNMKGNDY. Residues 167 to 187 traverse the membrane as a helical segment; sequence VYTSTIANVGAIVFQLPFMYL. The Extracellular portion of the chain corresponds to 188 to 190; it reads LPR. A helical transmembrane segment spans residues 191 to 211; it reads FPSHIILPVMDLGWTWFTFAC. At 212–224 the chain is on the cytoplasmic side; that stretch reads YRANSLAELRAYR. The helical transmembrane segment at 225–245 threads the bilayer; that stretch reads FILSAFGAAYYPVSQYILGCW. The Extracellular segment spans residues 246–291; that stretch reads YAPDEINSRVCLFFCGQQLGSVTSGLLQSRIFKSLNGVHGLAGWRW. A helical membrane pass occupies residues 292-312; it reads MFLIDAIAISLPTAIIGFFVI. At 313-361 the chain is on the cytoplasmic side; it reads PGVPSKCYSLFLTDEEIRIARARNKRNQIKDGVDKSKLAPLWSRKLWKK. The helical transmembrane segment at 362-382 threads the bilayer; it reads VFCTPAFWVLVVFDTCSWNNM. Residues 383–408 lie on the Extracellular side of the membrane; the sequence is TAYSGSYTLWLKSNTKYSIAQVNNLS. Residues 409 to 429 traverse the membrane as a helical segment; the sequence is VIPACLGFAYVIFCAFGADLF. Residues 430-432 are Cytoplasmic-facing; it reads RCK. Residues 433–453 traverse the membrane as a helical segment; that stretch reads WIFMVFAAIMNTVSCALLIKW. Residues 454–460 lie on the Extracellular side of the membrane; sequence DIPSKAK. Residues 461–481 form a helical membrane-spanning segment; that stretch reads WYAFFTTYFSVAASPCLWSFI. The Cytoplasmic segment spans residues 482–492; it reads NDFLRFDPQVK. The chain crosses the membrane as a helical span at residues 493-513; the sequence is AITWIAIYSFSQSTYAWIPTL. Residues 514–526 lie on the Extracellular side of the membrane; it reads AWPTVESPRFKTG. A helical transmembrane segment spans residues 527–547; that stretch reads YTVSLIFGAIYGLWTFVVLFF. Topologically, residues 548 to 593 are cytoplasmic; the sequence is YKRNEKKHALGNGIILYDSNKGEELPEFVKKNMEERDGYYYLKRSS.

This sequence belongs to the major facilitator superfamily. Allantoate permease family.

The protein resides in the cell membrane. In terms of biological role, involved in uptake of biotin with the concomitant entry of protons. This is Vitamin H transporter (VHT1) from Saccharomyces cerevisiae (strain ATCC 204508 / S288c) (Baker's yeast).